Here is a 161-residue protein sequence, read N- to C-terminus: MNPRRKKRLGLILALFVGISATVGLMLYALNQNMDLFYTPTELVNGKPDGTKPEVGQRLRIGGMVVAGSVVRDSNSLEVSFKVADVGPQVTVIYDGILPDLFREGQGIVAQGVLVDATTIKAHEVLAKHDEEYMPPEVAEAMKKTHEPLQYTEQQKQGTGQ.

At 1-8 (MNPRRKKR) the chain is on the cytoplasmic side. Residues 9–29 (LGLILALFVGISATVGLMLYA) form a helical; Signal-anchor for type II membrane protein membrane-spanning segment. The Periplasmic segment spans residues 30-161 (LNQNMDLFYT…TEQQKQGTGQ (132 aa)). Heme-binding residues include H129 and Y133. The disordered stretch occupies residues 142–161 (MKKTHEPLQYTEQQKQGTGQ). A compositionally biased stretch (polar residues) spans 151–161 (YTEQQKQGTGQ).

It belongs to the CcmE/CycJ family.

It is found in the cell inner membrane. Functionally, heme chaperone required for the biogenesis of c-type cytochromes. Transiently binds heme delivered by CcmC and transfers the heme to apo-cytochromes in a process facilitated by CcmF and CcmH. This is Cytochrome c-type biogenesis protein CcmE from Aliivibrio fischeri (strain MJ11) (Vibrio fischeri).